The chain runs to 129 residues: Small ribosomal subunit protein uS11 (129 aa).

It belongs to the universal ribosomal protein uS11 family. As to quaternary structure, part of the 30S ribosomal subunit. Interacts with proteins S7 and S18. Binds to IF-3.

Functionally, located on the platform of the 30S subunit, it bridges several disparate RNA helices of the 16S rRNA. Forms part of the Shine-Dalgarno cleft in the 70S ribosome. In Listeria innocua serovar 6a (strain ATCC BAA-680 / CLIP 11262), this protein is Small ribosomal subunit protein uS11.